The following is a 74-amino-acid chain: RNA-binding protein Hfq (74 aa).

The 61-residue stretch at aspartate 9–valine 69 folds into the Sm domain.

The protein belongs to the Hfq family. Homohexamer.

Its function is as follows. RNA chaperone that binds small regulatory RNA (sRNAs) and mRNAs to facilitate mRNA translational regulation in response to envelope stress, environmental stress and changes in metabolite concentrations. Also binds with high specificity to tRNAs. The polypeptide is RNA-binding protein Hfq (Bacillus cytotoxicus (strain DSM 22905 / CIP 110041 / 391-98 / NVH 391-98)).